The following is a 385-amino-acid chain: AA13 family lytic polysaccharide monooxygenase NCU08746 (385 aa).

The first 18 residues, 1-18 (MKFSIISVALASAITVDA), serve as a signal peptide directing secretion. His19 provides a ligand contact to Cu(2+). His19 is subject to Methylhistidine. In terms of domain architecture, Chitin-binding type-4 spans 19–248 (HGYLTIPFSR…AQVYLSCADI (230 aa)). A disulfide bond links Cys40 and Cys43. N-linked (GlcNAc...) asparagine glycosylation is present at Asn54. 6 disulfides stabilise this stretch: Cys66–Cys245, Cys102–Cys203, Cys118–Cys145, Cys153–Cys161, Cys167–Cys173, and Cys181–Cys192. His109 is a binding site for Cu(2+). Tyr242 is a binding site for Cu(2+). One can recognise a CBM20 domain in the interval 278 to 385 (CTPAATVAVT…ESVAVESSWK (108 aa)). Asn365 is a glycosylation site (N-linked (GlcNAc...) asparagine).

This sequence belongs to the polysaccharide monooxygenase AA13 family. Requires Cu(2+) as cofactor.

The protein resides in the secreted. It carries out the reaction starch + reduced acceptor + O2 = D-glucono-1,5-lactone-terminated malto-oligosaccharides + short-chain malto-oligosaccharides + acceptor + H2O.. In terms of biological role, starch-active lytic polysaccharide monooxygenase that oxidizes the C1 position of starch substrates, but not in cellulose or chitin. Catalysis by LPMOs requires the reduction of the active-site copper from Cu(II) to Cu(I) by a reducing agent and H(2)O(2) or O(2) as a cosubstrate. This chain is AA13 family lytic polysaccharide monooxygenase NCU08746, found in Neurospora crassa (strain ATCC 24698 / 74-OR23-1A / CBS 708.71 / DSM 1257 / FGSC 987).